Reading from the N-terminus, the 437-residue chain is Protein farnesyltransferase subunit beta (437 aa).

PFTB repeat units lie at residues 123-164, 174-215, 222-263, 270-312, and 332-374; these read ATDV…CIIG, REKL…SLTN, FEGT…VILK, LKSL…PLLH, and QQAL…SIAQ. Residues 248–251 and 291–294 contribute to the (2E,6E)-farnesyl diphosphate site; these read HGGY and RCNK. Residues Asp-297 and Cys-299 each coordinate Zn(2+). (2E,6E)-farnesyl diphosphate is bound at residue 300 to 303; sequence YSFW. Residue His-362 participates in Zn(2+) binding. A Phosphothreonine modification is found at Thr-436.

The protein belongs to the protein prenyltransferase subunit beta family. In terms of assembly, heterodimer of FNTA and FNTB. It depends on Zn(2+) as a cofactor.

It carries out the reaction L-cysteinyl-[protein] + (2E,6E)-farnesyl diphosphate = S-(2E,6E)-farnesyl-L-cysteinyl-[protein] + diphosphate. Essential subunit of the farnesyltransferase complex. Catalyzes the transfer of a farnesyl moiety from farnesyl diphosphate to a cysteine at the fourth position from the C-terminus of several proteins having the C-terminal sequence Cys-aliphatic-aliphatic-X. The protein is Protein farnesyltransferase subunit beta (FNTB) of Bos taurus (Bovine).